Consider the following 202-residue polypeptide: Putative 5'(3')-deoxyribonucleotidase (202 aa).

Aspartate 22 serves as the catalytic Nucleophile. Mg(2+)-binding residues include aspartate 22, aspartate 24, and aspartate 156. Aspartate 24 acts as the Proton donor in catalysis.

It belongs to the 5'(3')-deoxyribonucleotidase family. It depends on Mg(2+) as a cofactor.

Dephosphorylates the 5' and 2'(3')-phosphates of deoxyribonucleotides. In Chlorobaculum tepidum (strain ATCC 49652 / DSM 12025 / NBRC 103806 / TLS) (Chlorobium tepidum), this protein is Putative 5'(3')-deoxyribonucleotidase.